Reading from the N-terminus, the 100-residue chain is MNEEKAIKEFVNALKSKYRGRIKKIILFGSYARGDYTEESDIDILIVGDVDFDYVIDLCTKLLLKYGVVINAIVESEELFNKKINWSFHRNVLEEGRVLY.

The GSX(10)DXD motif motif lies at 29–43 (GSYARGDYTEESDID). Mg(2+) contacts are provided by D41 and D43.

Belongs to the MntA antitoxin family. The cofactor is Mg(2+).

The catalysed reaction is L-tyrosyl-[protein] + ATP = O-(5'-adenylyl)-L-tyrosyl-[protein] + diphosphate. It carries out the reaction O-(5'-adenylyl)-L-tyrosyl-[protein] + ATP = O-[5'-(adenylyl-(5'-&gt;3')-adenylyl)]-L-tyrosyl-[protein] + diphosphate. Functionally, putative antitoxin component of a putative type VII toxin-antitoxin (TA) system. Its cognate toxin might be MJ0605, which it might AMPylate. The polypeptide is Putative protein adenylyltransferase MJ0604 (Methanocaldococcus jannaschii (strain ATCC 43067 / DSM 2661 / JAL-1 / JCM 10045 / NBRC 100440) (Methanococcus jannaschii)).